Reading from the N-terminus, the 362-residue chain is Endolytic peptidoglycan transglycosylase RlpA (362 aa).

Residues 1–17 (MRKQWLGICIAAGMLAA) form the signal peptide. Cys18 is lipidated: N-palmitoyl cysteine. A lipid anchor (S-diacylglycerol cysteine) is attached at Cys18. A disordered region spans residues 198-276 (PDLSGGAGTS…PSTTPATSPA (79 aa)). Over residues 262 to 276 (PVVTAPSTTPATSPA) the composition is skewed to low complexity. An SPOR domain is found at 285–361 (QSASGNFMVQ…AQLQSFITTA (77 aa)).

It belongs to the RlpA family.

It is found in the cell membrane. Lytic transglycosylase with a strong preference for naked glycan strands that lack stem peptides. The chain is Endolytic peptidoglycan transglycosylase RlpA from Escherichia coli O157:H7.